The following is a 217-amino-acid chain: Small ribosomal subunit protein uS3 (217 aa).

The region spanning 29–97 (ADYLHEDLAI…AQLNKLTGKQ (69 aa)) is the KH type-2 domain.

It belongs to the universal ribosomal protein uS3 family. As to quaternary structure, part of the 30S ribosomal subunit. Forms a tight complex with proteins S10 and S14.

Binds the lower part of the 30S subunit head. Binds mRNA in the 70S ribosome, positioning it for translation. In Streptococcus mutans serotype c (strain ATCC 700610 / UA159), this protein is Small ribosomal subunit protein uS3.